The following is a 382-amino-acid chain: Mannitol-1-phosphate 5-dehydrogenase (382 aa).

Residue 3-14 (ALHFGAGNIGRG) coordinates NAD(+).

It belongs to the mannitol dehydrogenase family.

The catalysed reaction is D-mannitol 1-phosphate + NAD(+) = beta-D-fructose 6-phosphate + NADH + H(+). The chain is Mannitol-1-phosphate 5-dehydrogenase from Erwinia tasmaniensis (strain DSM 17950 / CFBP 7177 / CIP 109463 / NCPPB 4357 / Et1/99).